A 685-amino-acid chain; its full sequence is Eukaryotic peptide chain release factor GTP-binding subunit (685 aa).

Disordered regions lie at residues 1 to 34 (MSDSNQGNNQQNYQQYSQNGNQQQGNNRYQGYQA), 63 to 99 (YNPDAGYQQQYNPQGGYQQYNPQGGYQQQFNPQGGRG), and 112 to 234 (GYQA…NVTS). N-acetylserine is present on Ser2. An interaction with PAB1 region spans residues 2–239 (SDSNQGNNQQ…ANVTSADALI (238 aa)). Residues 5 to 135 (NQGNNQQNYQ…LNDFQKQQKQ (131 aa)) are prion domain (PrD). Residues 117-129 (FQPQSQGMSLNDF) are compositionally biased toward polar residues. The charged stretch occupies residues 139-249 (KPKKTLKLVS…KEQEEEVDDE (111 aa)). Residues 166–222 (AESDKKEEEKSAETKEPTKEPTKVEEPVKKEEKPVQTEEKTEEKSELPKVEDLKISE) are compositionally biased toward basic and acidic residues. The span at 223–234 (STHNTNNANVTS) shows a compositional bias: polar residues. In terms of domain architecture, tr-type G spans 258–484 (KDHVSLIFMG…YLDTMNHVDR (227 aa)). Residues 267–274 (GHVDAGKS) form a G1 region. 267–274 (GHVDAGKS) lines the GTP pocket. Residues 323 to 327 (GKTIE) are G2. The interval 344–347 (DAPG) is G3. GTP-binding positions include 406-409 (NKMD) and 449-450 (GY). The tract at residues 406–409 (NKMD) is G4. Residues 448–450 (SGY) are G5. At Ser571 the chain carries Phosphoserine.

Belongs to the TRAFAC class translation factor GTPase superfamily. Classic translation factor GTPase family. ERF3 subfamily. In terms of assembly, heterodimer of two subunits, one of which binds GTP. Interacts with polyadenylate-binding protein PAB1, and TPA1.

It localises to the cytoplasm. The enzyme catalyses GTP + H2O = GDP + phosphate + H(+). In terms of biological role, GTPase component of the eRF1-eRF3-GTP ternary complex, a ternary complex that mediates translation termination in response to the termination codons UAA, UAG and UGA. SUP35/eRF3 mediates SUP45/eRF1 delivery to stop codons: The eRF1-eRF3-GTP complex binds to a stop codon in the ribosomal A-site. GTP hydrolysis by SUP35/eRF3 induces a conformational change that leads to its dissociation, permitting SUP45/eRF1 to accommodate fully in the A-site. Recruited by polyadenylate-binding protein PAB1 to poly(A)-tails of mRNAs. Interaction with PAB1 is also required for regulation of normal mRNA decay through translation termination-coupled poly(A) shortening. This Saccharomyces cerevisiae (strain ATCC 204508 / S288c) (Baker's yeast) protein is Eukaryotic peptide chain release factor GTP-binding subunit (SUP35).